A 949-amino-acid chain; its full sequence is Glycine dehydrogenase (decarboxylating) (949 aa).

Lysine 704 bears the N6-(pyridoxal phosphate)lysine mark.

This sequence belongs to the GcvP family. In terms of assembly, the glycine cleavage system is composed of four proteins: P, T, L and H. It depends on pyridoxal 5'-phosphate as a cofactor.

It carries out the reaction N(6)-[(R)-lipoyl]-L-lysyl-[glycine-cleavage complex H protein] + glycine + H(+) = N(6)-[(R)-S(8)-aminomethyldihydrolipoyl]-L-lysyl-[glycine-cleavage complex H protein] + CO2. Functionally, the glycine cleavage system catalyzes the degradation of glycine. The P protein binds the alpha-amino group of glycine through its pyridoxal phosphate cofactor; CO(2) is released and the remaining methylamine moiety is then transferred to the lipoamide cofactor of the H protein. This is Glycine dehydrogenase (decarboxylating) from Bacteroides fragilis (strain ATCC 25285 / DSM 2151 / CCUG 4856 / JCM 11019 / LMG 10263 / NCTC 9343 / Onslow / VPI 2553 / EN-2).